We begin with the raw amino-acid sequence, 795 residues long: Putative replication origin-binding protein (795 aa).

Residues 121–289 form the Helicase ATP-binding domain; sequence WLSNDKIKTL…DNFGKSIVVN (169 aa). Position 134–141 (134–141) interacts with ATP; that stretch reads SPMGTGKT.

Belongs to the mimivirus R1 family.

Probably involved in DNA replication. May bind the genome origin of replication (ori). The sequence is that of Putative replication origin-binding protein from Acanthamoeba polyphaga (Amoeba).